An 873-amino-acid chain; its full sequence is Sister chromatid cohesion protein PDS5 homolog C (873 aa).

4 HEAT repeats span residues 53–92 (NALTPLMKGLVGGKLFKHSDVDVKVAVAACISEITRITAP), 99–136 (DQMKEVFKLIVSSFEDLVDKSSRSYAKRISILETVAKV), 149–187 (ALLIEMFQHFLKAIRDHHSGNVFSSMENIMTLVLEESED), and 189–227 (PSEMLSPILHSVKKDDEISQVSRRLAEQVLSNCASKLKT). Positions 266 to 301 (NEKEDSQGHIKRETEVEKAAEISTPERTDAPKDESG) are enriched in basic and acidic residues. Disordered stretches follow at residues 266-611 (NEKE…LVGS) and 658-873 (SPLD…KRKR). T289 is subject to Phosphothreonine. The segment covering 303-319 (SGVSNGVAQQNDSSVDT) has biased composition (polar residues). Residues 320–334 (DSMKKQDDTGAKDEP) show a composition bias toward basic and acidic residues. Polar residues predominate over residues 336–348 (QLDNPRNTDLNNT). Composition is skewed to basic and acidic residues over residues 349-365 (TEEKPDVEHQIEEKENE) and 373-394 (DLSKDSDIKEETEPAELLDSKD). Composition is skewed to polar residues over residues 400-411 (PVDSSVTAATSS) and 418-438 (SVQILPSKTSGDETANVSSPS). Residues 456–466 (KKKESSTEEVK) show a composition bias toward basic and acidic residues. Residues 494–510 (KVASSSKTKPTVPPSKK) show a composition bias toward low complexity. Composition is skewed to basic and acidic residues over residues 511–526 (STSETKVAKQSEKKVV) and 535–555 (TKPKEEKKKPGRGKAIDEESL). The segment covering 661–681 (DESELSQDEEAADQTGQEEDA) has biased composition (acidic residues). Residues 701 to 725 (SSAKKGSGAGSSKAKATPASKSSKT) are compositionally biased toward low complexity. Positions 726–746 (SQDDKTASKSKDSKEASREEE) are enriched in basic and acidic residues. Residues 747–757 (ASSEEESEEEE) show a composition bias toward acidic residues. 2 stretches are compositionally biased toward low complexity: residues 795 to 814 (KATTSSKSKSGPVKSVPAKS) and 822 to 831 (KSGSASTPAS). Basic and acidic residues predominate over residues 844-853 (ETPKEPEPAT). Low complexity predominate over residues 854–866 (KAKSGKSQGSQSK).

Belongs to the PDS5 family. As to quaternary structure, interacts with the cohesin complex.

Its subcellular location is the nucleus. In terms of biological role, cohesin cofactor dispensable during the meiotic division but playing an important role in DNA repair by homologous recombination (HR) probably by helping SMC5/SMC6 complex. Regulator of sister chromatid cohesion in mitosis which may stabilize cohesin complex association with chromatin. May couple sister chromatid cohesion during mitosis to DNA replication. Cohesion ensures that chromosome partitioning is accurate in both meiotic and mitotic cells and plays an important role in DNA repair. This Arabidopsis thaliana (Mouse-ear cress) protein is Sister chromatid cohesion protein PDS5 homolog C.